We begin with the raw amino-acid sequence, 111 residues long: Fluoride-specific ion channel FluC (111 aa).

A run of 3 helical transmembrane segments spans residues 2-22 (GLLL…RFAL), 36-56 (GILL…AFLI), and 71-91 (FLLV…SLDI). G79 and T82 together coordinate Na(+).

It belongs to the fluoride channel Fluc/FEX (TC 1.A.43) family.

Its subcellular location is the cell inner membrane. It carries out the reaction fluoride(in) = fluoride(out). With respect to regulation, na(+) is not transported, but it plays an essential structural role and its presence is essential for fluoride channel function. Its function is as follows. Fluoride-specific ion channel. Important for reducing fluoride concentration in the cell, thus reducing its toxicity. The polypeptide is Fluoride-specific ion channel FluC (Francisella tularensis subsp. holarctica (strain FTNF002-00 / FTA)).